The primary structure comprises 314 residues: MSPRELVVLGTAGQAPTRTRNHNGYLLRWDGTSVLFDPGEGTQRQMLHAEVSAPRIERICVTHRHNDHCLGVPGVLNRMAQDGPGRPVTLHGPDDAFEHLRALAVVAAAHVEVTVEGIPVRDEPVEVARVAGARLSARALDHRVPTVGYRLEEPAGRSFDAAALADAGITGPDVGELQRRGELRGVRLADVSVERPGQVFGFVMDTRDHPAVVDLVRDADLAVLECTYSERHADLARDRGHLTARQAGRAAARAGVRTLVLAHFSQRYPDLEELAAEARAAVAELGGRTRVHLAHDLDVVPVPPRRSAPARAAS.

The Zn(2+) site is built by histidine 63, histidine 65, aspartate 67, histidine 68, histidine 142, aspartate 205, and histidine 263. Aspartate 67 functions as the Proton acceptor in the catalytic mechanism.

Belongs to the RNase Z family. Homodimer. Zn(2+) serves as cofactor.

It catalyses the reaction Endonucleolytic cleavage of RNA, removing extra 3' nucleotides from tRNA precursor, generating 3' termini of tRNAs. A 3'-hydroxy group is left at the tRNA terminus and a 5'-phosphoryl group is left at the trailer molecule.. Its function is as follows. Zinc phosphodiesterase, which displays some tRNA 3'-processing endonuclease activity. Probably involved in tRNA maturation, by removing a 3'-trailer from precursor tRNA. This is Ribonuclease Z from Kineococcus radiotolerans (strain ATCC BAA-149 / DSM 14245 / SRS30216).